The following is a 422-amino-acid chain: MTAEKITQGTEGLNVPNEPIIPFIIGDGIGPDIWKAASRVIDAAVEKAYNGEKRIEWKEVLAGQKAFDTTGEWLPQETLDTIKEYLIAVKGPLTTPIGGGIRSLNVALRQELDLFTCLRPVRWFKGVPSPVKRPQDVDMVIFRENTEDIYAGIEFKEGTTEVKKVIDFLQNEMGATNIRFPETSGIGIKPVSKEGTERLVRAAIQYAIDNNRKSVTLVHKGNIMKFTEGSFKQWGYDLALSEFGDQVFTWQQYDEIVEKEGRDAANAAQEKAEKEGKIIIKDSIADIFLQQILTRPAEHDVVATMNLNGDYISDALAAQVGGIGIAPGANINYETGHAIFEATHGTAPKYAGLNKVNPSSVILSSVLMLEHLGWQEAADKITDSIEDTIASKVVTYDFARLMDGAEEVSTSAFADELIKNLK.

NADP(+) is bound at residue Thr94. D-threo-isocitrate-binding residues include Ser103, Asn105, Arg109, Arg119, and Arg143. Residue Asp310 participates in Mg(2+) binding. Residues 344–350, Asn357, Tyr396, and Arg400 each bind NADP(+); that span reads HGTAPKY.

This sequence belongs to the isocitrate and isopropylmalate dehydrogenases family. Homodimer. Requires Mg(2+) as cofactor. It depends on Mn(2+) as a cofactor.

It carries out the reaction D-threo-isocitrate + NADP(+) = 2-oxoglutarate + CO2 + NADPH. Catalyzes the oxidative decarboxylation of isocitrate to 2-oxoglutarate and carbon dioxide with the concomitant reduction of NADP(+). This Staphylococcus aureus (strain MSSA476) protein is Isocitrate dehydrogenase [NADP] (icd).